A 177-amino-acid chain; its full sequence is Late embryogenesis abundant protein 1 (177 aa).

Positions 1–177 are disordered; that stretch reads MASHDQSYKA…DKDHFPTNRH (177 aa). The segment covering 28–39 has biased composition (basic and acidic residues); the sequence is IEDKAQAAKEKA. Low complexity predominate over residues 40–89; sequence QQAAQTAKDKTSQTAQAAKEKTQQTAQAAKEKTQQTAQAAKDETQQTAQA. 4 repeat units span residues 53-63, 64-74, 75-85, and 86-96. Residues 53 to 96 form a 4 X 11 AA approximate tandem repeats of T-A-Q-A-A-K-E-K-T-Q-Q region; sequence TAQAAKEKTQQTAQAAKEKTQQTAQAAKDETQQTAQAAKDKTQQ. The segment covering 90–117 has biased composition (basic and acidic residues); sequence AKDKTQQTTEATKEKAQDTTGRAREKGS. The span at 119-142 shows a compositional bias: polar residues; sequence MGQSTKETAQSGKDNSAGFLQQTG. Over residues 164-177 the composition is skewed to basic and acidic residues; the sequence is NDDKDKDHFPTNRH.

Belongs to the LEA type 4 family. In terms of tissue distribution, highest expression is found in seeds. No expression detected in adult tissues.

This chain is Late embryogenesis abundant protein 1, found in Cicer arietinum (Chickpea).